Here is a 385-residue protein sequence, read N- to C-terminus: UPF0764 protein C16orf89 homolog (385 aa).

An N-terminal signal peptide occupies residues 1-20 (MARLGLLLLLLLALPPHFSS). Residues 344–385 (AHPEYYPNHGDPYSSSQSPASNYQDGAAGPDVQRTGRPLSVS) are disordered. The span at 356–367 (YSSSQSPASNYQ) shows a compositional bias: polar residues.

This sequence belongs to the UPF0764 family. Homodimer. Glycosylated. In terms of tissue distribution, predominantly expressed in thyroid tissue.

Its subcellular location is the secreted. This Mus musculus (Mouse) protein is UPF0764 protein C16orf89 homolog.